Consider the following 215-residue polypeptide: 3-demethoxyubiquinol 3-hydroxylase (215 aa).

Fe cation contacts are provided by glutamate 64, glutamate 94, histidine 97, glutamate 146, glutamate 178, and histidine 181.

This sequence belongs to the COQ7 family. The cofactor is Fe cation.

The protein localises to the cell membrane. It carries out the reaction a 5-methoxy-2-methyl-3-(all-trans-polyprenyl)benzene-1,4-diol + AH2 + O2 = a 3-demethylubiquinol + A + H2O. Its pathway is cofactor biosynthesis; ubiquinone biosynthesis. Functionally, catalyzes the hydroxylation of 2-nonaprenyl-3-methyl-6-methoxy-1,4-benzoquinol during ubiquinone biosynthesis. The polypeptide is 3-demethoxyubiquinol 3-hydroxylase (Coxiella burnetii (strain CbuG_Q212) (Coxiella burnetii (strain Q212))).